Here is a 348-residue protein sequence, read N- to C-terminus: Serpentine receptor class beta-7 (348 aa).

7 consecutive transmembrane segments (helical) span residues 31–51, 63–83, 107–127, 145–165, 191–211, 241–261, and 280–300; these read QLIM…FQLL, LVGY…EAFI, GNLL…SITF, FLGP…ILLI, MFFI…FLLL, ISVI…TILL, and GAFM…SVYF.

The protein belongs to the nematode receptor-like protein srb family.

Its subcellular location is the membrane. The polypeptide is Serpentine receptor class beta-7 (srb-7) (Caenorhabditis elegans).